Reading from the N-terminus, the 139-residue chain is Natriuretic peptide Mf-NP (139 aa).

The first 25 residues, 1–25, serve as a signal peptide directing secretion; sequence MVGLSRLTGGGLLLVLALLPLALDG. Residues 26-75 constitute a propeptide that is removed on maturation; sequence KPLEEAPTAPSRIIPFSRPVRKESQAVLDPMVHPERPAGSGDDGDLSRLE. Cys86 and Cys102 form a disulfide bridge. Residues 117–139 constitute a propeptide that is removed on maturation; that stretch reads IIPFSRPVRKESRAALDRMQHPG.

Belongs to the natriuretic peptide family. In terms of tissue distribution, expressed by the venom gland.

The protein resides in the secreted. In terms of biological role, natriuretic peptide that dose-dependently induces the rapid relaxation of rat aortic strips phenylephrine-precontracted. Acts by stimulating cGMP production in a dose-dependent manner (by probably activating NPR1 and/or NPR2). May also show potent hypotensive effects. In Micrurus fulvius (Eastern coral snake), this protein is Natriuretic peptide Mf-NP.